We begin with the raw amino-acid sequence, 187 residues long: Putative manganese efflux pump MntP (187 aa).

6 helical membrane-spanning segments follow: residues 3–23 (FYSLIFLSCALGMDAFAVSLC), 35–55 (HYLIVGIYFGGFQALMPTIGY), 56–76 (FIGITFASFIASIDHWIAFIL), 107–127 (LALAIATSIDALAVGVSFAFL), 129–149 (VNLLLAIFLIGIITFILCIIA), and 166–186 (LLGGLVLIILGVKILIEHLFF).

It belongs to the MntP (TC 9.B.29) family.

It is found in the cell inner membrane. In terms of biological role, probably functions as a manganese efflux pump. The polypeptide is Putative manganese efflux pump MntP (Campylobacter jejuni subsp. doylei (strain ATCC BAA-1458 / RM4099 / 269.97)).